We begin with the raw amino-acid sequence, 207 residues long: MNMFRQAVRSFVRYQSTTSLNPKILPFNAKETPIPKCVEAVYHAPLKIEPTHRDLIADIQLRSYDNENLDFFSSFVLRAGYYLGIPMKGPKPLPTKRKRWTVIRAPFVMAKSKENFERHTHARLIRLYDCNTELVETLLSYISKHGISGVGIKCNLYQREPIDLDSKKDGPELENIDISSQLQGLDDVVGAKVVELLNNPEFKKHLQ.

The N-terminal 14 residues, 1–14 (MNMFRQAVRSFVRY), are a transit peptide targeting the mitochondrion.

Belongs to the universal ribosomal protein uS10 family. In terms of assembly, part of the mitochondrial small ribosomal subunit.

Its subcellular location is the mitochondrion. In terms of biological role, involved in mitochondrial genome encoded proteins translation. Involved in the binding of tRNA to the ribosomes. The sequence is that of Small ribosomal subunit protein uS10m (RSM10) from Kluyveromyces lactis (strain ATCC 8585 / CBS 2359 / DSM 70799 / NBRC 1267 / NRRL Y-1140 / WM37) (Yeast).